The primary structure comprises 75 residues: Holin (75 aa).

The next 2 membrane-spanning stretches (helical) occupy residues 16 to 36 and 39 to 59; these read FAQAMIGALGAGATGLIGVDW and ALSIAGFATVVSILTSLASGI.

In terms of assembly, homomultimer.

Its subcellular location is the host cell inner membrane. Its function is as follows. Accumulates harmlessly in the cytoplasmic membrane until it reaches a critical concentration that triggers the formation of micron-scale pores (holes) causing host cell membrane disruption and endolysin escape into the periplasmic space. Determines the precise timing of host cell lysis. Participates with the endolysin protein in the sequential events which lead to the programmed host cell lysis releasing the mature viral particles from the host cell. This is Holin from Lactococcus lactis subsp. cremoris (Streptococcus cremoris).